The chain runs to 366 residues: Anthranilate phosphoribosyltransferase (366 aa).

Residues glycine 79, 82 to 83 (GD), threonine 87, 89 to 92 (NIST), 107 to 115 (KHGNRAATS), and serine 119 each bind 5-phospho-alpha-D-ribose 1-diphosphate. Glycine 79 contributes to the anthranilate binding site. Mg(2+) is bound at residue serine 91. Asparagine 110 contacts anthranilate. Arginine 165 is an anthranilate binding site. Mg(2+) contacts are provided by aspartate 223 and glutamate 224. The segment at 342–366 (ESLSGKSMSMRSRTSILSPASGERV) is disordered. Over residues 345-359 (SGKSMSMRSRTSILS) the composition is skewed to polar residues.

This sequence belongs to the anthranilate phosphoribosyltransferase family. As to quaternary structure, homodimer. Mg(2+) serves as cofactor.

The enzyme catalyses N-(5-phospho-beta-D-ribosyl)anthranilate + diphosphate = 5-phospho-alpha-D-ribose 1-diphosphate + anthranilate. It functions in the pathway amino-acid biosynthesis; L-tryptophan biosynthesis; L-tryptophan from chorismate: step 2/5. In terms of biological role, catalyzes the transfer of the phosphoribosyl group of 5-phosphorylribose-1-pyrophosphate (PRPP) to anthranilate to yield N-(5'-phosphoribosyl)-anthranilate (PRA). In Methanosarcina barkeri (strain Fusaro / DSM 804), this protein is Anthranilate phosphoribosyltransferase.